Here is a 133-residue protein sequence, read N- to C-terminus: Large ribosomal subunit protein bL20 (133 aa).

It belongs to the bacterial ribosomal protein bL20 family.

Binds directly to 23S ribosomal RNA and is necessary for the in vitro assembly process of the 50S ribosomal subunit. It is not involved in the protein synthesizing functions of that subunit. This chain is Large ribosomal subunit protein bL20, found in Mesorhizobium japonicum (strain LMG 29417 / CECT 9101 / MAFF 303099) (Mesorhizobium loti (strain MAFF 303099)).